Consider the following 230-residue polypeptide: 7-cyano-7-deazaguanine synthase (230 aa).

ATP is bound at residue leucine 16–glycine 26. Zn(2+) is bound by residues cysteine 195, cysteine 205, cysteine 208, and cysteine 211.

Belongs to the QueC family. Requires Zn(2+) as cofactor.

The catalysed reaction is 7-carboxy-7-deazaguanine + NH4(+) + ATP = 7-cyano-7-deazaguanine + ADP + phosphate + H2O + H(+). It participates in purine metabolism; 7-cyano-7-deazaguanine biosynthesis. In terms of biological role, catalyzes the ATP-dependent conversion of 7-carboxy-7-deazaguanine (CDG) to 7-cyano-7-deazaguanine (preQ(0)). The protein is 7-cyano-7-deazaguanine synthase of Rhizorhabdus wittichii (strain DSM 6014 / CCUG 31198 / JCM 15750 / NBRC 105917 / EY 4224 / RW1) (Sphingomonas wittichii).